The chain runs to 163 residues: Putative 4-hydroxy-4-methyl-2-oxoglutarate aldolase (163 aa).

Residues 79–82 (GDQL) and Arg101 each bind substrate. Asp102 is a binding site for a divalent metal cation.

It belongs to the class II aldolase/RraA-like family. As to quaternary structure, homotrimer. The cofactor is a divalent metal cation.

It carries out the reaction 4-hydroxy-4-methyl-2-oxoglutarate = 2 pyruvate. The enzyme catalyses oxaloacetate + H(+) = pyruvate + CO2. Its function is as follows. Catalyzes the aldol cleavage of 4-hydroxy-4-methyl-2-oxoglutarate (HMG) into 2 molecules of pyruvate. Also contains a secondary oxaloacetate (OAA) decarboxylase activity due to the common pyruvate enolate transition state formed following C-C bond cleavage in the retro-aldol and decarboxylation reactions. The polypeptide is Putative 4-hydroxy-4-methyl-2-oxoglutarate aldolase (Dechloromonas aromatica (strain RCB)).